The sequence spans 328 residues: Probable G-protein coupled receptor 82 (328 aa).

Residues 1–11 (MTNNSTCIQPS) lie on the Extracellular side of the membrane. 2 N-linked (GlcNAc...) asparagine glycosylation sites follow: Asn3 and Asn4. A helical membrane pass occupies residues 12 to 32 (VISTTALPVTYIFLFIIGLFG). Residues 33–55 (NSLAQWVFLTKIGKKTSTHIYLA) are Cytoplasmic-facing. A helical membrane pass occupies residues 56 to 76 (NLVTANLLVCTAMPFMGIYFL). The Extracellular segment spans residues 77 to 92 (RGFYWKYQSVQCRLVN). Residues 93 to 115 (FLGTLSMHVSMFVSLLILSWIAI) traverse the membrane as a helical segment. At 116-156 (SRYATLMKKESKQEATSCYERMFYGHVLKRFRQPNFARTMC) the chain is on the cytoplasmic side. The chain crosses the membrane as a helical span at residues 157-177 (IYIWGVVLVIIIPVTLYYSVV). Residues 178–197 (EATEEGQSQCYNRQMELGAR) are Extracellular-facing. A helical transmembrane segment spans residues 198–218 (PSQIAGLIGTTFIGFSFLVVV). Over 219-251 (TSYYSLVSHLRRVRTCTSITEKDLTYRSVKRHL) the chain is Cytoplasmic. A helical transmembrane segment spans residues 252–272 (LIIQVLLVVCFLPYSIFKPIF). Topologically, residues 273–328 (YVLHQREGDCQQLNYLIEAKNILTCLASARSSTDPIIFLLLDKTFKKTLYGLLTKS) are extracellular.

It belongs to the G-protein coupled receptor 1 family.

The protein localises to the cell membrane. Orphan receptor. This chain is Probable G-protein coupled receptor 82 (Gpr82), found in Mus musculus (Mouse).